The following is an 89-amino-acid chain: OMEGA-ectatommitoxin(02)-Rm1b (89 aa).

The signal sequence occupies residues 1–30 (MKDSYISIVIAYLMVTFILVSSMPIEGEKG). 3 disulfides stabilise this stretch: Cys-39–Cys-52, Cys-47–Cys-68, and Cys-70–Cys-79. The EGF-like domain occupies 43-80 (YANYCFNGKCVHFVAQDEPGKPCYSCICDKFYIGKRCG).

It belongs to the EGF domain peptide family. In terms of tissue distribution, expressed by the venom gland.

The protein localises to the secreted. Its function is as follows. Ant peptide with probable defensive activity which acts as a potent agonist of the mammalian epidermal growth factor receptor (EGFR). Mimics, both structurally and functionally, vertebrate epidermal growth factor (EGF) peptide hormones. In vivo, intraplantar injection in mice causes long-lasting (several days) hypersensitivity of the injected paw to both mechanical and thermal stimuli. Its long-lasting effect is unusual for venom toxins whose effects are usually immediate. One possible explanation is that it would reduce the duration of a nest attack, discourage future attacks, or enhance the actions of subsequent exposure to other pain-inducing venom peptides. In Rhytidoponera metallica (Australian green-headed ant), this protein is OMEGA-ectatommitoxin(02)-Rm1b.